The sequence spans 423 residues: Lysosomal acid phosphatase (423 aa).

An N-terminal signal peptide occupies residues 1 to 30; that stretch reads MAGRQSGWSQAALLQFLLGMCLMVMPPIQA. At 31–380 the chain is on the lumenal side; that stretch reads RSLRFVTLLY…QLASDTADTE (350 aa). The active-site Nucleophile is the His-42. N-linked (GlcNAc...) asparagine glycosylation is found at Asn-92, Asn-133, Asn-167, Asn-177, Asn-191, Asn-197, and Asn-267. Cystine bridges form between Cys-159/Cys-370, Cys-212/Cys-310, and Cys-345/Cys-349. The active-site Proton donor is the Asp-287. 2 N-linked (GlcNAc...) asparagine glycosylation sites follow: Asn-322 and Asn-331. Residues 381 to 401 form a helical membrane-spanning segment; the sequence is VIVALAVCGSILFLLIVLLLT. At 402 to 423 the chain is on the cytoplasmic side; the sequence is VLFRMQAQPPGYHHVADREDHA.

This sequence belongs to the histidine acid phosphatase family. Post-translationally, the membrane-bound form is converted to the soluble form by sequential proteolytic processing. First, the C-terminal cytoplasmic tail is removed. Cleavage by a lysosomal protease releases the soluble form in the lysosome lumen.

The protein resides in the lysosome membrane. It is found in the lysosome lumen. It carries out the reaction a phosphate monoester + H2O = an alcohol + phosphate. This is Lysosomal acid phosphatase (Acp2) from Rattus norvegicus (Rat).